The sequence spans 1448 residues: Gag-Pol polyprotein (1448 aa).

The N-myristoyl glycine; by host moiety is linked to residue Gly-2. A Nuclear export signal motif is present at residues 16–22 (WEKIYLR). The Nuclear localization signal motif lies at 26–32 (KKKYMMK). Positions 107 to 116 (KMKAEQKEPE) are enriched in basic and acidic residues. The tract at residues 107 to 129 (KMKAEQKEPEPEQAAGAAAAPES) is disordered. Residues 118–128 (EQAAGAAAAPE) are compositionally biased toward low complexity. Tyr-135 is modified (phosphotyrosine; by host). 2 consecutive CCHC-type zinc fingers follow at residues 393-410 (IKCF…NCKA) and 414-431 (KGCW…DCRS). Basic and acidic residues-rich tracts occupy residues 446–460 (REAR…KERA) and 473–490 (GEDH…DREL). The tract at residues 446–490 (REARKFPPDNNKERANSPSNRELWVSGGEDHTGDREGRKGEDREL) is disordered. Residues 517 to 586 (KEALLDTGAD…TPVNIIGRNF (70 aa)) form the Peptidase A2 domain. The active-site For protease activity; shared with dimeric partner is the Asp-522. The Reverse transcriptase domain maps to 640–830 (EGKISRIGPE…PPFLWMGYEL (191 aa)). Positions 706, 781, and 782 each coordinate Mg(2+). The tract at residues 823-831 (FLWMGYELH) is RT 'primer grip'. Residues 994–1010 (WETWWTEYWQATWIPDW) carry the Tryptophan repeat motif motif. In terms of domain architecture, RNase H type-1 spans 1030-1153 (ISGAETYYVD…IDKLVSTGIR (124 aa)). Mg(2+) is bound by residues Asp-1039, Glu-1074, Asp-1094, and Asp-1145. The Integrase-type zinc-finger motif lies at 1159 to 1200 (DGIDKAQEEHERYHSNWKAMASDFNLPPIVAKEIVASCDKCQ). His-1168, His-1172, Cys-1196, and Cys-1199 together coordinate Zn(2+). The region spanning 1210-1360 (INCSPGVWQL…TAGERIIDII (151 aa)) is the Integrase catalytic domain. The Mg(2+) site is built by Asp-1220 and Asp-1272. Positions 1379–1426 (FRVYYRDSREPTWKGPAKLLWKGEGAVVIQDNGDIKVVPRRKAKIIRD) form a DNA-binding region, integrase-type.

Homotrimer. Interacts with gp41 (via C-terminus). In terms of assembly, homodimer. The active site consists of two apposed aspartic acid residues. As to quaternary structure, heterodimer of p66 RT and p51 RT (RT p66/p51). Heterodimerization of RT is essential for DNA polymerase activity. Despite the sequence identities, p66 RT and p51 RT have distinct folding. Homotetramer; may further associate as a homohexadecamer. Mg(2+) is required as a cofactor. Specific enzymatic cleavages by the viral protease yield mature proteins. The protease is released by autocatalytic cleavage. The polyprotein is cleaved during and after budding, this process is termed maturation. Proteolytic cleavage of p66 RT removes the RNase H domain to yield the p51 RT subunit. In terms of processing, capsid protein p24 is phosphorylated.

It is found in the virion. Its subcellular location is the host nucleus. It localises to the host cytoplasm. The protein localises to the host cell membrane. The catalysed reaction is Specific for a P1 residue that is hydrophobic, and P1' variable, but often Pro.. The enzyme catalyses Endohydrolysis of RNA in RNA/DNA hybrids. Three different cleavage modes: 1. sequence-specific internal cleavage of RNA. Human immunodeficiency virus type 1 and Moloney murine leukemia virus enzymes prefer to cleave the RNA strand one nucleotide away from the RNA-DNA junction. 2. RNA 5'-end directed cleavage 13-19 nucleotides from the RNA end. 3. DNA 3'-end directed cleavage 15-20 nucleotides away from the primer terminus.. It carries out the reaction 3'-end directed exonucleolytic cleavage of viral RNA-DNA hybrid.. It catalyses the reaction DNA(n) + a 2'-deoxyribonucleoside 5'-triphosphate = DNA(n+1) + diphosphate. With respect to regulation, the viral protease is inhibited by many synthetic protease inhibitors (PIs), such as amprenavir, atazanavir, indinavir, loprinavir, nelfinavir, ritonavir and saquinavir. RT can be inhibited either by nucleoside RT inhibitors (NRTIs) or by non nucleoside RT inhibitors (NNRTIs). NRTIs act as chain terminators, whereas NNRTIs inhibit DNA polymerization by binding a small hydrophobic pocket near the RT active site and inducing an allosteric change in this region. Classical NRTIs are abacavir, adefovir (PMEA), didanosine (ddI), lamivudine (3TC), stavudine (d4T), tenofovir (PMPA), zalcitabine (ddC), and zidovudine (AZT). Classical NNRTIs are atevirdine (BHAP U-87201E), delavirdine, efavirenz (DMP-266), emivirine (I-EBU), and nevirapine (BI-RG-587). The tritherapies used as a basic effective treatment of AIDS associate two NRTIs and one NNRTI. Use of protease inhibitors in tritherapy regimens permit more ambitious therapeutic strategies. Gag-Pol polyprotein and Gag polyprotein may regulate their own translation, by the binding genomic RNA in the 5'-UTR. At low concentration, Gag-Pol and Gag would promote translation, whereas at high concentration, the polyproteins encapsidate genomic RNA and then shut off translation. Its function is as follows. Matrix protein p17 has two main functions: in infected cell, it targets Gag and Gag-pol polyproteins to the plasma membrane via a multipartite membrane-binding signal, that includes its myristointegration complex. The myristoylation signal and the NLS exert conflicting influences its subcellular localization. The key regulation of these motifs might be phosphorylation of a portion of MA molecules on the C-terminal tyrosine at the time of virus maturation, by virion-associated cellular tyrosine kinase. Implicated in the release from host cell mediated by Vpu. In terms of biological role, capsid protein p24 forms the conical core that encapsulates the genomic RNA-nucleocapsid complex in the virion. The core is constituted by capsid protein hexamer subunits. The core is disassembled soon after virion entry. Interaction with host PPIA/CYPA protects the virus from restriction by host TRIM5-alpha and from an unknown antiviral activity in host cells. This capsid restriction by TRIM5 is one of the factors which restricts SIV to the simian species. Functionally, nucleocapsid protein p7 encapsulates and protects viral dimeric unspliced (genomic) RNA. Binds these RNAs through its zinc fingers. Facilitates rearangement of nucleic acid secondary structure during retrotranscription of genomic RNA. This capability is referred to as nucleic acid chaperone activity. The aspartyl protease mediates proteolytic cleavages of Gag and Gag-Pol polyproteins during or shortly after the release of the virion from the plasma membrane. Cleavages take place as an ordered, step-wise cascade to yield mature proteins. This process is called maturation. Displays maximal activity during the budding process just prior to particle release from the cell. Also cleaves Nef and Vif, probably concomitantly with viral structural proteins on maturation of virus particles. Hydrolyzes host EIF4GI and PABP1 in order to shut off the capped cellular mRNA translation. The resulting inhibition of cellular protein synthesis serves to ensure maximal viral gene expression and to evade host immune response. Its function is as follows. Reverse transcriptase/ribonuclease H (RT) is a multifunctional enzyme that converts the viral dimeric RNA genome into dsDNA in the cytoplasm, shortly after virus entry into the cell. This enzyme displays a DNA polymerase activity that can copy either DNA or RNA templates, and a ribonuclease H (RNase H) activity that cleaves the RNA strand of RNA-DNA heteroduplexes in a partially processive 3' to 5' endonucleasic mode. Conversion of viral genomic RNA into dsDNA requires many steps. A tRNA binds to the primer-binding site (PBS) situated at the 5'-end of the viral RNA. RT uses the 3' end of the tRNA primer to perform a short round of RNA-dependent minus-strand DNA synthesis. The reading proceeds through the U5 region and ends after the repeated (R) region which is present at both ends of viral RNA. The portion of the RNA-DNA heteroduplex is digested by the RNase H, resulting in a ssDNA product attached to the tRNA primer. This ssDNA/tRNA hybridizes with the identical R region situated at the 3' end of viral RNA. This template exchange, known as minus-strand DNA strong stop transfer, can be either intra- or intermolecular. RT uses the 3' end of this newly synthesized short ssDNA to perform the RNA-dependent minus-strand DNA synthesis of the whole template. RNase H digests the RNA template except for two polypurine tracts (PPTs) situated at the 5'-end and near the center of the genome. It is not clear if both polymerase and RNase H activities are simultaneous. RNase H can probably proceed both in a polymerase-dependent (RNA cut into small fragments by the same RT performing DNA synthesis) and a polymerase-independent mode (cleavage of remaining RNA fragments by free RTs). Secondly, RT performs DNA-directed plus-strand DNA synthesis using the PPTs that have not been removed by RNase H as primers. PPTs and tRNA primers are then removed by RNase H. The 3' and 5' ssDNA PBS regions hybridize to form a circular dsDNA intermediate. Strand displacement synthesis by RT to the PBS and PPT ends produces a blunt ended, linear dsDNA copy of the viral genome that includes long terminal repeats (LTRs) at both ends. In terms of biological role, integrase catalyzes viral DNA integration into the host chromosome, by performing a series of DNA cutting and joining reactions. This enzyme activity takes place after virion entry into a cell and reverse transcription of the RNA genome in dsDNA. The first step in the integration process is 3' processing. This step requires a complex comprising the viral genome, matrix protein, Vpr and integrase. This complex is called the pre-integration complex (PIC). The integrase protein removes 2 nucleotides from each 3' end of the viral DNA, leaving recessed CA OH's at the 3' ends. In the second step, the PIC enters cell nucleus. This process is mediated through integrase and Vpr proteins, and allows the virus to infect a non dividing cell. This ability to enter the nucleus is specific of lentiviruses, other retroviruses cannot and rely on cell division to access cell chromosomes. In the third step, termed strand transfer, the integrase protein joins the previously processed 3' ends to the 5' ends of strands of target cellular DNA at the site of integration. The 5'-ends are produced by integrase-catalyzed staggered cuts, 5 bp apart. A Y-shaped, gapped, recombination intermediate results, with the 5'-ends of the viral DNA strands and the 3' ends of target DNA strands remaining unjoined, flanking a gap of 5 bp. The last step is viral DNA integration into host chromosome. This involves host DNA repair synthesis in which the 5 bp gaps between the unjoined strands are filled in and then ligated. Since this process occurs at both cuts flanking the SIV genome, a 5 bp duplication of host DNA is produced at the ends of SIV integration. Alternatively, Integrase may catalyze the excision of viral DNA just after strand transfer, this is termed disintegration. This is Gag-Pol polyprotein (gag-pol) from Pan troglodytes (Chimpanzee).